Here is a 372-residue protein sequence, read N- to C-terminus: Lung adenoma susceptibility protein 2 (372 aa).

Positions 1-31 (MAKSKTKHRLCSQESSVSALLASCTLSGSNS) are cleaved as a signal peptide. Serine 161 is subject to Phosphoserine. The disordered stretch occupies residues 248 to 268 (KSPVPVNSDDSPQQTSRAKSA). Positions 255 to 265 (SDDSPQQTSRA) are enriched in polar residues.

The protein localises to the secreted. In terms of biological role, might play a role in cell proliferation. The protein is Lung adenoma susceptibility protein 2 (LAS2) of Homo sapiens (Human).